The chain runs to 302 residues: Meiotically up-regulated gene 129 protein (302 aa).

Its function is as follows. Has a role in meiosis. This chain is Meiotically up-regulated gene 129 protein (mug129), found in Schizosaccharomyces pombe (strain 972 / ATCC 24843) (Fission yeast).